Reading from the N-terminus, the 596-residue chain is Aspartate--tRNA(Asp/Asn) ligase (596 aa).

Glu175 is a binding site for L-aspartate. An aspartate region spans residues 199 to 202 (QQYK). Residues Arg221 and His454 each contribute to the L-aspartate site. 221 to 223 (RDE) contacts ATP. Position 488 (Glu488) interacts with ATP. Position 495 (Arg495) interacts with L-aspartate. Residue 540 to 543 (GIDR) coordinates ATP.

The protein belongs to the class-II aminoacyl-tRNA synthetase family. Type 1 subfamily. Homodimer.

It is found in the cytoplasm. It carries out the reaction tRNA(Asx) + L-aspartate + ATP = L-aspartyl-tRNA(Asx) + AMP + diphosphate. Aspartyl-tRNA synthetase with relaxed tRNA specificity since it is able to aspartylate not only its cognate tRNA(Asp) but also tRNA(Asn). Reaction proceeds in two steps: L-aspartate is first activated by ATP to form Asp-AMP and then transferred to the acceptor end of tRNA(Asp/Asn). This is Aspartate--tRNA(Asp/Asn) ligase from Rhizobium rhizogenes (strain K84 / ATCC BAA-868) (Agrobacterium radiobacter).